A 414-amino-acid chain; its full sequence is Enolase (414 aa).

Residue Gln162 participates in (2R)-2-phosphoglycerate binding. The Proton donor role is filled by Glu204. 3 residues coordinate Mg(2+): Asp239, Glu280, and Asp307. (2R)-2-phosphoglycerate contacts are provided by Lys332, Arg361, Ser362, and Lys383. The active-site Proton acceptor is Lys332.

It belongs to the enolase family. It depends on Mg(2+) as a cofactor.

It is found in the cytoplasm. It localises to the secreted. The protein resides in the cell surface. It carries out the reaction (2R)-2-phosphoglycerate = phosphoenolpyruvate + H2O. It functions in the pathway carbohydrate degradation; glycolysis; pyruvate from D-glyceraldehyde 3-phosphate: step 4/5. In terms of biological role, catalyzes the reversible conversion of 2-phosphoglycerate (2-PG) into phosphoenolpyruvate (PEP). It is essential for the degradation of carbohydrates via glycolysis. In Campylobacter lari (strain RM2100 / D67 / ATCC BAA-1060), this protein is Enolase.